A 293-amino-acid polypeptide reads, in one-letter code: Acetyl-coenzyme A carboxylase carboxyl transferase subunit beta (293 aa).

The CoA carboxyltransferase N-terminal domain maps to 29-293; that stretch reads LWSKCPECGQ…GCKPMELTSA (265 aa). Residues Cys33, Cys36, Cys52, and Cys55 each coordinate Zn(2+). A C4-type zinc finger spans residues 33–55; sequence CPECGQVVYLKDLKLNASVCANC.

Belongs to the AccD/PCCB family. Acetyl-CoA carboxylase is a heterohexamer composed of biotin carboxyl carrier protein (AccB), biotin carboxylase (AccC) and two subunits each of ACCase subunit alpha (AccA) and ACCase subunit beta (AccD). Zn(2+) is required as a cofactor.

The protein localises to the cytoplasm. It carries out the reaction N(6)-carboxybiotinyl-L-lysyl-[protein] + acetyl-CoA = N(6)-biotinyl-L-lysyl-[protein] + malonyl-CoA. It participates in lipid metabolism; malonyl-CoA biosynthesis; malonyl-CoA from acetyl-CoA: step 1/1. Component of the acetyl coenzyme A carboxylase (ACC) complex. Biotin carboxylase (BC) catalyzes the carboxylation of biotin on its carrier protein (BCCP) and then the CO(2) group is transferred by the transcarboxylase to acetyl-CoA to form malonyl-CoA. This chain is Acetyl-coenzyme A carboxylase carboxyl transferase subunit beta, found in Synechococcus sp. (strain CC9605).